The following is a 142-amino-acid chain: Large ribosomal subunit protein uL13 (142 aa).

This sequence belongs to the universal ribosomal protein uL13 family. In terms of assembly, part of the 50S ribosomal subunit.

Functionally, this protein is one of the early assembly proteins of the 50S ribosomal subunit, although it is not seen to bind rRNA by itself. It is important during the early stages of 50S assembly. In Pseudomonas putida (strain ATCC 700007 / DSM 6899 / JCM 31910 / BCRC 17059 / LMG 24140 / F1), this protein is Large ribosomal subunit protein uL13.